The chain runs to 374 residues: Putative phosphoserine aminotransferase (374 aa).

Position 48 (arginine 48) interacts with L-glutamate. Pyridoxal 5'-phosphate-binding positions include 82-83 (AT), phenylalanine 106, threonine 152, aspartate 174, and glutamine 197. At lysine 198 the chain carries N6-(pyridoxal phosphate)lysine. 249-250 (NT) serves as a coordination point for pyridoxal 5'-phosphate.

The protein belongs to the class-V pyridoxal-phosphate-dependent aminotransferase family. SerC subfamily. Homodimer. The cofactor is pyridoxal 5'-phosphate.

The protein resides in the cytoplasm. It catalyses the reaction O-phospho-L-serine + 2-oxoglutarate = 3-phosphooxypyruvate + L-glutamate. It carries out the reaction 4-(phosphooxy)-L-threonine + 2-oxoglutarate = (R)-3-hydroxy-2-oxo-4-phosphooxybutanoate + L-glutamate. The protein operates within amino-acid biosynthesis; L-serine biosynthesis; L-serine from 3-phospho-D-glycerate: step 2/3. It functions in the pathway cofactor biosynthesis; pyridoxine 5'-phosphate biosynthesis; pyridoxine 5'-phosphate from D-erythrose 4-phosphate: step 3/5. In terms of biological role, catalyzes the reversible conversion of 3-phosphohydroxypyruvate to phosphoserine and of 3-hydroxy-2-oxo-4-phosphonooxybutanoate to phosphohydroxythreonine. This is Putative phosphoserine aminotransferase from Mycobacterium avium (strain 104).